The primary structure comprises 444 residues: Glutamate--tRNA ligase 1 (444 aa).

The short motif at 8–18 (PSPTGFLHVGN) is the 'HIGH' region element. The 'KMSKS' region signature appears at 239–243 (KISKR). Lys-242 is a binding site for ATP.

It belongs to the class-I aminoacyl-tRNA synthetase family. Glutamate--tRNA ligase type 1 subfamily. In terms of assembly, monomer.

The protein resides in the cytoplasm. It carries out the reaction tRNA(Glu) + L-glutamate + ATP = L-glutamyl-tRNA(Glu) + AMP + diphosphate. In terms of biological role, catalyzes the attachment of glutamate to tRNA(Glu) in a two-step reaction: glutamate is first activated by ATP to form Glu-AMP and then transferred to the acceptor end of tRNA(Glu). The protein is Glutamate--tRNA ligase 1 of Zymomonas mobilis subsp. mobilis (strain ATCC 31821 / ZM4 / CP4).